The chain runs to 309 residues: Glutaminase (309 aa).

7 residues coordinate substrate: Ser64, Asn114, Glu160, Asn167, Tyr191, Tyr243, and Val261.

Belongs to the glutaminase family. In terms of assembly, homotetramer.

It carries out the reaction L-glutamine + H2O = L-glutamate + NH4(+). The chain is Glutaminase from Methylobacterium radiotolerans (strain ATCC 27329 / DSM 1819 / JCM 2831 / NBRC 15690 / NCIMB 10815 / 0-1).